The sequence spans 505 residues: Glutamyl-tRNA(Gln) amidotransferase subunit B, mitochondrial (505 aa).

The protein belongs to the GatB/GatE family. GatB subfamily. As to quaternary structure, subunit of the heterotrimeric GatCAB amidotransferase (AdT) complex, composed of A, B and C subunits.

The protein localises to the mitochondrion. The catalysed reaction is L-glutamyl-tRNA(Gln) + L-glutamine + ATP + H2O = L-glutaminyl-tRNA(Gln) + L-glutamate + ADP + phosphate + H(+). Allows the formation of correctly charged Gln-tRNA(Gln) through the transamidation of misacylated Glu-tRNA(Gln) in the mitochondria. The reaction takes place in the presence of glutamine and ATP through an activated gamma-phospho-Glu-tRNA(Gln). In Schizosaccharomyces japonicus (strain yFS275 / FY16936) (Fission yeast), this protein is Glutamyl-tRNA(Gln) amidotransferase subunit B, mitochondrial.